The primary structure comprises 297 residues: Lipoyl synthase (297 aa).

[4Fe-4S] cluster-binding residues include Cys34, Cys39, Cys45, Cys60, Cys64, Cys67, and Ser273. The Radical SAM core domain maps to 46–262; it reads WNKRHATVMI…KYVAYSKGFL (217 aa).

The protein belongs to the radical SAM superfamily. Lipoyl synthase family. It depends on [4Fe-4S] cluster as a cofactor.

It is found in the cytoplasm. It carries out the reaction [[Fe-S] cluster scaffold protein carrying a second [4Fe-4S](2+) cluster] + N(6)-octanoyl-L-lysyl-[protein] + 2 oxidized [2Fe-2S]-[ferredoxin] + 2 S-adenosyl-L-methionine + 4 H(+) = [[Fe-S] cluster scaffold protein] + N(6)-[(R)-dihydrolipoyl]-L-lysyl-[protein] + 4 Fe(3+) + 2 hydrogen sulfide + 2 5'-deoxyadenosine + 2 L-methionine + 2 reduced [2Fe-2S]-[ferredoxin]. Its pathway is protein modification; protein lipoylation via endogenous pathway; protein N(6)-(lipoyl)lysine from octanoyl-[acyl-carrier-protein]: step 2/2. Functionally, catalyzes the radical-mediated insertion of two sulfur atoms into the C-6 and C-8 positions of the octanoyl moiety bound to the lipoyl domains of lipoate-dependent enzymes, thereby converting the octanoylated domains into lipoylated derivatives. The polypeptide is Lipoyl synthase (Ehrlichia chaffeensis (strain ATCC CRL-10679 / Arkansas)).